We begin with the raw amino-acid sequence, 312 residues long: uncharacterized protein (312 aa).

10 helical membrane passes run 11 to 31 (IAAI…KIAL), 46 to 66 (IAFA…SIRV), 72 to 92 (ILPL…FGLV), 98 to 118 (EAGI…AYVL), 128 to 148 (GFTV…GVDV), 155 to 171 (GSLL…MYNT), 183 to 203 (TELT…IALV), 221 to 241 (PGFV…TSFL), 254 to 274 (MSAF…VILN), and 277 to 297 (LAWY…GSNI). EamA domains are found at residues 18–142 (FIIG…FIFV) and 164–297 (LSSA…GSNI).

This sequence belongs to the EamA transporter family.

Its subcellular location is the cell membrane. This is an uncharacterized protein from Bacillus subtilis (strain 168).